A 96-amino-acid chain; its full sequence is Maintenance of carboxysome distribution protein B (96 aa).

A compositionally biased stretch (basic and acidic residues) spans 1–18; it reads MTNLEDKLSASIKTENKD. The segment at 1–96 is disordered; it reads MTNLEDKLSA…STHPRRVWPD (96 aa). Residues 59 to 74 show a composition bias toward low complexity; that stretch reads ARATTTKPAVSKSSKP.

As to quaternary structure, monomer, associates with McdA:DNA. Interacts with shell components of the carboxysome.

It is found in the carboxysome. In terms of biological role, mcdA and McdB together mediate carboxysome positioning on the nucleoid and to prevent their aggregation in the cell. Undergoes liquid-liquid phase separation at pH 7.0 in the presence of crowders polyethylene glycol or Ficoll. McdA is an ATPase that forms dynamic gradients on the nucleoid in response to adapter protein McdB, which associates with carboxysomes. The interplay between McdA gradients on the nucleoid and McdB-bound carboxysomes result in the equal spacing of Cbs along the cell length. Stimulates the ATPase activity of McdA, causing McdA to be released from DNA. Functionally, incorrect positioning (aggregation) of carboxysomes results in reduced CO(2) fixation by encapsulated form 1 ribulose-1,5-bisphosphate carboxylase (RuBisCO, cbbL/cbbS), which leads to slower growth. The chain is Maintenance of carboxysome distribution protein B from Halothiobacillus neapolitanus (strain ATCC 23641 / c2) (Thiobacillus neapolitanus).